We begin with the raw amino-acid sequence, 739 residues long: Catalase-peroxidase (739 aa).

An N-terminal signal peptide occupies residues 1–23 (MLKKIVTALGMSGMLLAANSAIA). The tryptophyl-tyrosyl-methioninium (Trp-Tyr) (with M-247) cross-link spans 100–221 (WHDAGTYRLA…YAATQMGLIY (122 aa)). H101 (proton acceptor) is an active-site residue. A cross-link (tryptophyl-tyrosyl-methioninium (Tyr-Met) (with W-100)) is located at residues 221–247 (YVNPEGPDGKPDIKGAASEIRQAFRAM). Position 262 (H262) interacts with heme b.

This sequence belongs to the peroxidase family. Peroxidase/catalase subfamily. Homodimer or homotetramer. Requires heme b as cofactor. Post-translationally, formation of the three residue Trp-Tyr-Met cross-link is important for the catalase, but not the peroxidase activity of the enzyme.

The catalysed reaction is H2O2 + AH2 = A + 2 H2O. It carries out the reaction 2 H2O2 = O2 + 2 H2O. Functionally, bifunctional enzyme with both catalase and broad-spectrum peroxidase activity. This is Catalase-peroxidase from Francisella philomiragia subsp. philomiragia (strain ATCC 25017 / CCUG 19701 / FSC 153 / O#319-036).